Consider the following 679-residue polypeptide: Methionine--tRNA ligase (679 aa).

Zn(2+) is bound by residues cysteine 147, cysteine 150, cysteine 160, and cysteine 163. Positions 332–336 (KISTS) match the 'KMSKS' region motif. Threonine 335 serves as a coordination point for ATP. The tRNA-binding domain maps to 578–679 (DFMKLDIRVG…REVKPGSEVK (102 aa)).

The protein belongs to the class-I aminoacyl-tRNA synthetase family. MetG type 1 subfamily. In terms of assembly, homodimer. The cofactor is Zn(2+).

The protein localises to the cytoplasm. It catalyses the reaction tRNA(Met) + L-methionine + ATP = L-methionyl-tRNA(Met) + AMP + diphosphate. Is required not only for elongation of protein synthesis but also for the initiation of all mRNA translation through initiator tRNA(fMet) aminoacylation. This chain is Methionine--tRNA ligase, found in Bacteroides fragilis (strain YCH46).